Here is a 327-residue protein sequence, read N- to C-terminus: Aspartate--ammonia ligase (327 aa).

This sequence belongs to the class-II aminoacyl-tRNA synthetase family. AsnA subfamily.

It localises to the cytoplasm. The catalysed reaction is L-aspartate + NH4(+) + ATP = L-asparagine + AMP + diphosphate + H(+). The protein operates within amino-acid biosynthesis; L-asparagine biosynthesis; L-asparagine from L-aspartate (ammonia route): step 1/1. The sequence is that of Aspartate--ammonia ligase from Bacillus cereus (strain AH820).